We begin with the raw amino-acid sequence, 263 residues long: Putative TATA-binding protein pB263R (263 aa).

It belongs to the asfivirus B263R family.

Putative TATA-binding protein. In Ornithodoros (relapsing fever ticks), this protein is Putative TATA-binding protein pB263R.